The following is a 382-amino-acid chain: MPMRIERDLHMAIGNGETSYTKNSRIQEKAMFQMKSVLEEATRAVCTTLLPQTMVVADLGCSSGPNTLRFVTEVTRIIAHHCKLEHNRRHDHLPQLQFFLNDLPGNDFNNLFQLIEQFNKSSTTHKGDAATEALQPPCYISGLPGSYYTRIFSSESVHLFHSLFCLQWRSQAPEQLKGTQKSCLDIYITKAMSPSMVKLFQQQFQKDFSLFLRLRYEELVSGGQMVLTFIGRKHEDVFTGESNHLYGLLAQSLKSLVDEGLVEKEKLESFYLPIYSPSVGEVEAIVKQLGLFNMNHVKVFEINWDPYDDSEGDDVHNSIESGENVAKCLRAVMEPLVASQFGERILDELFKEYARRVAKHLENEKTKHAVLVLSIEKAIIHV.

S-adenosyl-L-homocysteine contacts are provided by Tyr20, Cys61, Asn66, Asp102, Leu103, Ser146, and Tyr147. Residues Glu268 and Phe270 each contribute to the Mg(2+) site.

Belongs to the methyltransferase superfamily. Type-7 methyltransferase family. SABATH subfamily.

The protein is Inactive anthranilate O-methyltransferase 1 (AAMT1I) of Zea mays (Maize).